A 2295-amino-acid polypeptide reads, in one-letter code: Protein DOP1B (2295 aa).

Serine 556 and serine 597 each carry phosphoserine. Disordered regions lie at residues 574-599 (AGDE…SSPE), 651-684 (GEEN…DPKP), 1034-1059 (CKEA…QFTT), and 1092-1136 (DLPD…LQDL). Residues 1111–1131 (ADTSSGHTDSENTSTFSSPSH) show a composition bias toward polar residues. At serine 1167 the chain carries Phosphoserine.

The protein belongs to the DOP1 family. In terms of assembly, homooligomer. Heterotrimer with ATP9A and MON2; this interaction is retromer-independent. Interacts with SNX3. In terms of tissue distribution, expressed in liver, heart and brain.

It is found in the early endosome membrane. It localises to the golgi apparatus membrane. May play a role in regulating membrane trafficking of cargo proteins. Together with ATP9A and MON2, regulates SNX3 retromer-mediated endosomal sorting of WLS away from lysosomal degradation. The polypeptide is Protein DOP1B (Dop1b) (Mus musculus (Mouse)).